Here is a 218-residue protein sequence, read N- to C-terminus: Large ribosomal subunit protein uL3 (218 aa).

The tract at residues 132–152 (FKGQGASHGTQAVHRRPGSIG) is disordered.

This sequence belongs to the universal ribosomal protein uL3 family. In terms of assembly, part of the 50S ribosomal subunit. Forms a cluster with proteins L14 and L19.

Functionally, one of the primary rRNA binding proteins, it binds directly near the 3'-end of the 23S rRNA, where it nucleates assembly of the 50S subunit. This is Large ribosomal subunit protein uL3 from Rhodococcus erythropolis (strain PR4 / NBRC 100887).